The primary structure comprises 211 residues: Thymidylate kinase (211 aa).

10-17 (GGDGVGKS) provides a ligand contact to ATP.

It belongs to the thymidylate kinase family.

It catalyses the reaction dTMP + ATP = dTDP + ADP. Its function is as follows. Phosphorylation of dTMP to form dTDP in both de novo and salvage pathways of dTTP synthesis. The chain is Thymidylate kinase from Clavibacter sepedonicus (Clavibacter michiganensis subsp. sepedonicus).